Consider the following 457-residue polypeptide: Protein translocase subunit SecY (457 aa).

The Cytoplasmic portion of the chain corresponds to M1 to P20. Residues E21–P47 form a helical membrane-spanning segment. At L48–Q59 the chain is on the extracellular side. An intramembrane region (helical) is located at residues V60 to F67. Residues V60–I88 form a discontinuously helical membrane-spanning segment. Residues A68–I79 lie within the membrane without spanning it. Positions G80 to I88 form an intramembrane region, helical. Residues I89 to R109 lie on the Cytoplasmic side of the membrane. A helical membrane pass occupies residues K110 to G134. At R135–P146 the chain is on the extracellular side. The chain crosses the membrane as a helical span at residues L147 to Q171. The Cytoplasmic segment spans residues K172–S178. A helical transmembrane segment spans residues A179–F197. Over G198–P229 the chain is Extracellular. A helical transmembrane segment spans residues D230 to R251. Residues V252–T276 are Cytoplasmic-facing. Residues N277–A298 traverse the membrane as a helical segment. The Extracellular segment spans residues D299–V332. The chain crosses the membrane as a helical span at residues K333–W352. Residues V353–L395 lie on the Cytoplasmic side of the membrane. Residues T396–G414 traverse the membrane as a helical segment. Residues A415–G417 lie on the Extracellular side of the membrane. A helical membrane pass occupies residues T418–Y432. At Y433–V457 the chain is on the cytoplasmic side.

This sequence belongs to the SecY/SEC61-alpha family. As to quaternary structure, component of the Sec protein translocase complex. Heterotrimer consisting of alpha (SecY), beta (SecG) and gamma (SecE) subunits. The heterotrimers can form oligomers, although 1 heterotrimer is thought to be able to translocate proteins. Interacts with the ribosome. May interact with SecDF, and other proteins may be involved.

It localises to the cell membrane. Its function is as follows. The central subunit of the protein translocation channel SecYEG. Consists of two halves formed by TMs 1-5 and 6-10. These two domains form a lateral gate at the front which open onto the bilayer between TMs 2 and 7, and are clamped together by SecE at the back. The channel is closed by both a pore ring composed of hydrophobic SecY resides and a short helix (helix 2A) on the extracellular side of the membrane which forms a plug. The plug probably moves laterally to allow the channel to open. The ring and the pore may move independently. The sequence is that of Protein translocase subunit SecY from Aeropyrum pernix (strain ATCC 700893 / DSM 11879 / JCM 9820 / NBRC 100138 / K1).